We begin with the raw amino-acid sequence, 315 residues long: Transaldolase (315 aa).

Lysine 125 (schiff-base intermediate with substrate) is an active-site residue.

This sequence belongs to the transaldolase family. Type 1 subfamily. In terms of assembly, homodimer.

Its subcellular location is the cytoplasm. It catalyses the reaction D-sedoheptulose 7-phosphate + D-glyceraldehyde 3-phosphate = D-erythrose 4-phosphate + beta-D-fructose 6-phosphate. Its pathway is carbohydrate degradation; pentose phosphate pathway; D-glyceraldehyde 3-phosphate and beta-D-fructose 6-phosphate from D-ribose 5-phosphate and D-xylulose 5-phosphate (non-oxidative stage): step 2/3. Transaldolase is important for the balance of metabolites in the pentose-phosphate pathway. In Leptothrix cholodnii (strain ATCC 51168 / LMG 8142 / SP-6) (Leptothrix discophora (strain SP-6)), this protein is Transaldolase.